Here is a 350-residue protein sequence, read N- to C-terminus: Phosphotriesterase-related protein (350 aa).

Residues H22, H24, E169, H201, H230, and D298 each contribute to the a divalent metal cation site.

This sequence belongs to the metallo-dependent hydrolases superfamily. Phosphotriesterase family. A divalent metal cation is required as a cofactor.

The sequence is that of Phosphotriesterase-related protein from Drosophila grimshawi (Hawaiian fruit fly).